Reading from the N-terminus, the 824-residue chain is LPS-assembly protein LptD (824 aa).

2 disordered regions span residues 1–26 and 67–117; these read MTEQ…RRVR and TQTP…PAYV. The first 48 residues, 1-48, serve as a signal peptide directing secretion; sequence MTEQRRSPHHPATRPPAPPGTSRRVRLPASALRPLVLAMAGLTVSAHA. Residues 98-115 show a composition bias toward low complexity; it reads NTLNLSPSSTPSNPNAPA.

The protein belongs to the LptD family. In terms of assembly, component of the lipopolysaccharide transport and assembly complex. Interacts with LptE and LptA.

It localises to the cell outer membrane. Its function is as follows. Together with LptE, is involved in the assembly of lipopolysaccharide (LPS) at the surface of the outer membrane. In Cupriavidus metallidurans (strain ATCC 43123 / DSM 2839 / NBRC 102507 / CH34) (Ralstonia metallidurans), this protein is LPS-assembly protein LptD.